We begin with the raw amino-acid sequence, 593 residues long: Zinc metalloproteinase-disintegrin-like atrase-B (593 aa).

A signal peptide spans M1 to S20. Positions I21–L191 are excised as a propeptide. Positions K205–P400 constitute a Peptidase M12B domain. Positions 208 and 292 each coordinate Ca(2+). 3 cysteine pairs are disulfide-bonded: C316/C395, C356/C379, and C358/C363. N-linked (GlcNAc...) asparagine glycosylation is present at N319. H341 contacts Zn(2+). Residue E342 is part of the active site. Residues H345 and H351 each contribute to the Zn(2+) site. Ca(2+)-binding residues include C395, N398, I410, N413, F415, E417, E420, and D423. The 70-residue stretch at P408–N477 folds into the Disintegrin domain. Cystine bridges form between C422-C435, C424-C430, C434-C440, C449-C469, C456-C488, C481-C493, C500-C550, C515-C558, C528-C538, C545-C581, and C575-C586. Residues D455–D457 carry the D/ECD-tripeptide motif. Residues D457, L458, E460, and D472 each coordinate Ca(2+). N490 is a glycosylation site (N-linked (GlcNAc...) asparagine).

Belongs to the venom metalloproteinase (M12B) family. P-III subfamily. P-IIIa sub-subfamily. As to quaternary structure, monomer. It depends on Zn(2+) as a cofactor. Expressed by the venom gland.

The protein resides in the secreted. With respect to regulation, inhibited by EDTA, EGTA, 1,10-phenanthroline and DTT. Not inhibited by PMSF and SBTI. In terms of biological role, snake venom zinc protease that inhibits the classical and alternative pathways of complement by cleaving factor B, C6, C7, and C8. Also slowly and selectively degrades alpha-chain of fibrinogen (FGA), and shows edema-inducing activity. The sequence is that of Zinc metalloproteinase-disintegrin-like atrase-B from Naja atra (Chinese cobra).